We begin with the raw amino-acid sequence, 164 residues long: UPF0178 protein RPB_3201 (164 aa).

Belongs to the UPF0178 family.

This Rhodopseudomonas palustris (strain HaA2) protein is UPF0178 protein RPB_3201.